The primary structure comprises 150 residues: Probable FKBP-type 16 kDa peptidyl-prolyl cis-trans isomerase (150 aa).

The region spanning 14-88 is the PPIase FKBP-type domain; the sequence is NTEVTLHFAL…PNPQNVQIIP (75 aa).

It belongs to the FKBP-type PPIase family.

It carries out the reaction [protein]-peptidylproline (omega=180) = [protein]-peptidylproline (omega=0). PPIases accelerate the folding of proteins. The protein is Probable FKBP-type 16 kDa peptidyl-prolyl cis-trans isomerase (yaaD) of Pseudomonas fluorescens.